We begin with the raw amino-acid sequence, 736 residues long: MASIMEGPLSKWTNVMKGWQYRWFVLDYNAGLLSYYTSKDKMMRGSRRGCVRLRGAVIGIDDEDDSTFTITVDQKTFHFQARDADEREKWIHALEETILRHTLQLQGLDSGFVPSVQDFDKKLTEADAYLQILIEQLKLFDDKLQNCKEDEQRKKIETLKETTNSMVESIKHCIVLLQIAKDQSNAEKHADGMISTINPVDAIYQPSPLEPVISTMPSQTVLPPEPVQLCKSEQRPSSLPVGPVLATLGHHQTPTPNSTGSGHSPPSSSLTSPSHVNLSPNTVPEFSYSSSEDEFYDADEFHQSGSSPKRLIDSSGSASVLTHSSSGNSLKRPDTTESLNSSLSNGTSDADLFDSHDDRDDDAEAGSVEEHKSVIMHLLSQVRLGMDLTKVVLPTFILERRSLLEMYADFFAHPDLFVSISDQKDPKDRMVQVVKWYLSAFHAGRKGSVAKKPYNPILGEIFQCHWTLPNDTEENTELVSEGPVPWVSKNSVTFVAEQVSHHPPISAFYAECFNKKIQFNAHIWTKSKFLGMSIGVHNIGQGCVSCLDYDEHYILTFPNGYGRSILTVPWVELGGECNINCSKTGYSANIIFHTKPFYGGKKHRITAEIFSPNDKKSFCSIEGEWNGVMYAKYATGENTVFVDTKKLPIIKKKVRKLEDQNEYESRSLWKDVTFNLKIRDIDAATEAKHRLEERQRAEARERKEKEIQWETRLFHEDGECWVYDEPLLKRLGAAKH.

N-acetylalanine is present on alanine 2. A PH domain is found at 2 to 99; the sequence is ASIMEGPLSK…WIHALEETIL (98 aa). The segment at 231–367 is disordered; the sequence is KSEQRPSSLP…DRDDDAEAGS (137 aa). Positions 253–290 are enriched in low complexity; that stretch reads TPTPNSTGSGHSPPSSSLTSPSHVNLSPNTVPEFSYSS. Serine 306, serine 324, serine 325, serine 326, and serine 329 each carry phosphoserine. Polar residues-rich tracts occupy residues 314 to 329 and 336 to 347; these read SSGSASVLTHSSSGNS and TESLNSSLSNGT. Phosphoserine is present on serine 611.

This sequence belongs to the OSBP family. As to quaternary structure, heterodimer with OSBPL11. Interacts with OSBPL10. In terms of tissue distribution, widely expressed.

Its subcellular location is the late endosome membrane. It localises to the golgi apparatus. The protein localises to the trans-Golgi network membrane. The catalysed reaction is a 1,2-diacyl-sn-glycero-3-phospho-(1D-myo-inositol 4-phosphate)(out) + a 1,2-diacyl-sn-glycero-3-phospho-L-serine(in) = a 1,2-diacyl-sn-glycero-3-phospho-(1D-myo-inositol 4-phosphate)(in) + a 1,2-diacyl-sn-glycero-3-phospho-L-serine(out). Its function is as follows. Interacts with OSBPL11 to function as lipid transfer proteins. Together they form a heterodimer that localizes at the ER-trans-Golgi membrane contact sites, and exchanges phosphatidylserine (1,2-diacyl-sn-glycero-3-phospho-L-serine, PS) for phosphatidylinositol-4-phosphate (1,2-diacyl-sn-glycero-3-phospho-(1D-myo-inositol 4-phosphate), PI(4)P) between the two organelles, a step that is critical for sphingomyelin synthesis in the Golgi complex. The chain is Oxysterol-binding protein-related protein 9 (OSBPL9) from Homo sapiens (Human).